The sequence spans 509 residues: Dye-decolorizing peroxidase AauDyP1 (509 aa).

Residues 1–22 form the signal peptide; the sequence is MRLSPVFVALLSGLLAADLGLA. The propeptide occupies 23-61; the sequence is RSVAPRVADSPAAVTGTRKTSLLKNVAGLPPVPSAAQVA. Residue D229 is the Proton acceptor of the active site. N343 is a glycosylation site (N-linked (GlcNAc...) asparagine). A heme-binding site is contributed by H365. Residues N383, N410, and N476 are each glycosylated (N-linked (GlcNAc...) asparagine).

The protein belongs to the DyP-type peroxidase family. Heme b serves as cofactor.

It is found in the secreted. The catalysed reaction is Reactive Blue 5 + 2 H2O2 = 2,2'-disulfonyl azobenzene + 3-[(4-amino-6-chloro-1,3,5-triazin-2-yl)amino]benzenesulfonate + phthalate + 2 H2O + 2 H(+). The enzyme catalyses 2 a phenolic donor + H2O2 = 2 a phenolic radical donor + 2 H2O. Inhibited by imidazole. Functionally, manganese-independent peroxidase that is able to convert a large number of compounds, but its physiological substrate is not known. In addition to classic peroxidase substrates (e.g. 2,6-dimethoxyphenol), oxidizes dyes such as Reactive Blue 5 and Reactive Black 5. The protein is Dye-decolorizing peroxidase AauDyP1 of Auricularia auricula-judae (Judas ear fungus).